We begin with the raw amino-acid sequence, 347 residues long: Iron-sulfur cluster assembly protein SufC (347 aa).

In terms of domain architecture, ABC transporter spans 100 to 346 (LEIKDLHAIE…ENKGYSQFLK (247 aa)). 134 to 141 (GRNGSGKS) contacts ATP.

This sequence belongs to the ABC transporter superfamily. Ycf16 family. Component of a complex composed of SufB, SufC and SufD in a stoichiometric ratio of 1:2:1. Interacts with SufB. Interacts with SufD; the interaction enhances the ATPase activity of SufC. Post-translationally, proteolytically cleaved.

Its subcellular location is the plastid. The protein localises to the apicoplast. The enzyme catalyses ATP + H2O = ADP + phosphate + H(+). The protein operates within cofactor biosynthesis; iron-sulfur cluster biosynthesis. Functionally, participates in the sulfur mobilization (SUF) pathway for iron-sulfur (Fe-S) cluster biogenesis. As part of a complex consisting of SufB-SufC(2)-SufD, involved in assembly of [4Fe-4S] clusters. Exhibits ATPase activity. The polypeptide is Iron-sulfur cluster assembly protein SufC (Plasmodium falciparum (isolate 3D7)).